Consider the following 733-residue polypeptide: MFKTHKVEIEWAGRPLTIETGRVARQADGAVVATYGETVVLATVVSAKAPKPDQDFFPLTVNYQEKTYAVGKIPGGYFKRESRPSENETLISRLIDRPIRPLFVDDYKNDTQVIVSVIQHDLENNPDILSMIAASAALTLSGIPFMGPIAGARVGYCNGHYVLNPTLDEMPESKLDLVVAGTENAVLMVESEAHELSEEVMLGAITFGQKGFQPVIDAIIQLAEVAAKEPREFIPEDFSDLEKTMLKMIEKDLRKAYTITDKQQRYDAIDAIKTEILSKFAPEMEVNCELTADKIATVFKRLQAKIVRWNILDTGKRIDGRDLSTVRPIQSEVGILPRTHGSALFTRGETQALVVATLGTSEDEQYVDLLTGVCKETFLLHYNFPPFSVGETGRLSSPGRREIGHGKLAWRAIHPMLPTKEAFPYTIRVVSEITESNGSSSMATVCGTSLALMDAGVPLARPVAGIAMGLIKEGERFVILSDILGDEDHLGDMDFKVAGTKNGITSLQMDIKIDGITEDIMKIALEQAKDGRNHILNEMAKALTDARTELSEFSPRIEMMTIPVEKIREVIGSGGKVIREIVEQTGAKINIEDDGTIKIASPDTKSIETAKSWIHSIVDEPEVGTIYQGTVVKTTEFGAFINFFGSHDGLVHISQLASKRVAKTTDVVKEGDKVWVQLMGFDERGKIRLSMKVVDQQTGKEIPQDDLIKTEKEQNPDEKNKSEKKRHNRKKED.

Mg(2+) is bound by residues D488 and D494. A KH domain is found at 555–614 (PRIEMMTIPVEKIREVIGSGGKVIREIVEQTGAKINIEDDGTIKIASPDTKSIETAKSWI). An S1 motif domain is found at 624–692 (GTIYQGTVVK…ERGKIRLSMK (69 aa)). The tract at residues 698–733 (TGKEIPQDDLIKTEKEQNPDEKNKSEKKRHNRKKED) is disordered. Positions 702–721 (IPQDDLIKTEKEQNPDEKNK) are enriched in basic and acidic residues. Residues 722-733 (SEKKRHNRKKED) show a composition bias toward basic residues.

The protein belongs to the polyribonucleotide nucleotidyltransferase family. Mg(2+) serves as cofactor.

Its subcellular location is the cytoplasm. The enzyme catalyses RNA(n+1) + phosphate = RNA(n) + a ribonucleoside 5'-diphosphate. Functionally, involved in mRNA degradation. Catalyzes the phosphorolysis of single-stranded polyribonucleotides processively in the 3'- to 5'-direction. This chain is Polyribonucleotide nucleotidyltransferase, found in Bartonella bacilliformis (strain ATCC 35685 / KC583 / Herrer 020/F12,63).